The following is a 280-amino-acid chain: MTNIHPTAIVEDGAQIGNNVTIEPYAIVKKNVKLCDDVVVKSYAYIDGFTTIGRGTTIWPSAMIGNKPQDLKFKGEKTFVEIGEHCEIREFAMITSSTFEGTTVSIGNNCLIMPWAHIAHNCSVGNNVVFSTHVQLAGHVQVGDCVTIGSMVGVHQFVRIGSYAMVGAMSGIRRDIPPFTIGTGNPYALGGVNKVGLQRRRVPFETRLALIKTFKRVFRSGESFQDSLGSVLEDFGDVPEVRHFVEFCRQPSKRGIERGIDCEASLDEPIDKKEGAFVES.

Belongs to the transferase hexapeptide repeat family. LpxA subfamily. In terms of assembly, homotrimer.

The protein resides in the cytoplasm. The enzyme catalyses a (3R)-hydroxyacyl-[ACP] + UDP-N-acetyl-alpha-D-glucosamine = a UDP-3-O-[(3R)-3-hydroxyacyl]-N-acetyl-alpha-D-glucosamine + holo-[ACP]. The protein operates within glycolipid biosynthesis; lipid IV(A) biosynthesis; lipid IV(A) from (3R)-3-hydroxytetradecanoyl-[acyl-carrier-protein] and UDP-N-acetyl-alpha-D-glucosamine: step 1/6. Functionally, involved in the biosynthesis of lipid A, a phosphorylated glycolipid that anchors the lipopolysaccharide to the outer membrane of the cell. In Chlamydia muridarum (strain MoPn / Nigg), this protein is Acyl-[acyl-carrier-protein]--UDP-N-acetylglucosamine O-acyltransferase.